We begin with the raw amino-acid sequence, 145 residues long: Transmembrane protein 216 (145 aa).

4 consecutive transmembrane segments (helical) span residues I22–F42, L56–F76, L89–L109, and G122–F142.

Part of the tectonic-like complex (also named B9 complex). Interacts with TMEM107.

The protein localises to the membrane. It localises to the cytoplasm. It is found in the cytoskeleton. Its subcellular location is the cilium basal body. Its function is as follows. Part of the tectonic-like complex which is required for tissue-specific ciliogenesis and may regulate ciliary membrane composition. The sequence is that of Transmembrane protein 216 (TMEM216) from Homo sapiens (Human).